The sequence spans 515 residues: Protein disulfide-isomerase (515 aa).

An N-terminal signal peptide occupies residues Met-1–Ala-20. Thioredoxin domains follow at residues Ala-21–Pro-136 and Val-343–Lys-470. Residues Cys-58, Cys-61, Cys-393, and Cys-396 each act as nucleophile in the active site. Intrachain disulfides connect Cys-58–Cys-61 and Cys-393–Cys-396. Composition is skewed to basic and acidic residues over residues Lys-472–Ser-496 and Ser-506–Leu-515. The segment at Lys-472–Leu-515 is disordered. The short motif at His-512 to Leu-515 is the Prevents secretion from ER element.

The protein belongs to the protein disulfide isomerase family.

The protein localises to the endoplasmic reticulum lumen. It carries out the reaction Catalyzes the rearrangement of -S-S- bonds in proteins.. Participates in the folding of proteins containing disulfide bonds, may be involved in glycosylation, prolyl hydroxylation and triglyceride transfer. The protein is Protein disulfide-isomerase (pdiA) of Aspergillus oryzae (strain ATCC 42149 / RIB 40) (Yellow koji mold).